Reading from the N-terminus, the 375-residue chain is Nicotinate-nucleotide--dimethylbenzimidazole phosphoribosyltransferase (375 aa).

Residue glutamate 323 is the Proton acceptor of the active site. The interval 344–375 (LPEKPEELEAGEGPEAAEESSPEPENPEALAE) is disordered. Acidic residues predominate over residues 351–375 (LEAGEGPEAAEESSPEPENPEALAE).

This sequence belongs to the CobT family.

The enzyme catalyses 5,6-dimethylbenzimidazole + nicotinate beta-D-ribonucleotide = alpha-ribazole 5'-phosphate + nicotinate + H(+). It participates in nucleoside biosynthesis; alpha-ribazole biosynthesis; alpha-ribazole from 5,6-dimethylbenzimidazole: step 1/2. In terms of biological role, catalyzes the synthesis of alpha-ribazole-5'-phosphate from nicotinate mononucleotide (NAMN) and 5,6-dimethylbenzimidazole (DMB). In Streptomyces avermitilis (strain ATCC 31267 / DSM 46492 / JCM 5070 / NBRC 14893 / NCIMB 12804 / NRRL 8165 / MA-4680), this protein is Nicotinate-nucleotide--dimethylbenzimidazole phosphoribosyltransferase.